We begin with the raw amino-acid sequence, 152 residues long: Flagellar assembly factor FliW (152 aa).

The protein belongs to the FliW family. Interacts with translational regulator CsrA and flagellin(s).

The protein resides in the cytoplasm. Its function is as follows. Acts as an anti-CsrA protein, binds CsrA and prevents it from repressing translation of its target genes, one of which is flagellin. Binds to flagellin and participates in the assembly of the flagellum. The protein is Flagellar assembly factor FliW of Desulfitobacterium hafniense (strain DSM 10664 / DCB-2).